We begin with the raw amino-acid sequence, 142 residues long: Universal stress protein D (142 aa).

The protein belongs to the universal stress protein A family.

The protein localises to the cytoplasm. Functionally, required for resistance to DNA-damaging agents. This is Universal stress protein D (uspD) from Escherichia coli O157:H7.